The primary structure comprises 616 residues: Chaperone protein HscA (616 aa).

The protein belongs to the heat shock protein 70 family.

In terms of biological role, chaperone involved in the maturation of iron-sulfur cluster-containing proteins. Has a low intrinsic ATPase activity which is markedly stimulated by HscB. Involved in the maturation of IscU. This Escherichia coli (strain SMS-3-5 / SECEC) protein is Chaperone protein HscA.